Reading from the N-terminus, the 89-residue chain is Small ribosomal subunit protein uS15 (89 aa).

It belongs to the universal ribosomal protein uS15 family. As to quaternary structure, part of the 30S ribosomal subunit. Forms a bridge to the 50S subunit in the 70S ribosome, contacting the 23S rRNA.

Functionally, one of the primary rRNA binding proteins, it binds directly to 16S rRNA where it helps nucleate assembly of the platform of the 30S subunit by binding and bridging several RNA helices of the 16S rRNA. Its function is as follows. Forms an intersubunit bridge (bridge B4) with the 23S rRNA of the 50S subunit in the ribosome. This Cereibacter sphaeroides (strain ATCC 17023 / DSM 158 / JCM 6121 / CCUG 31486 / LMG 2827 / NBRC 12203 / NCIMB 8253 / ATH 2.4.1.) (Rhodobacter sphaeroides) protein is Small ribosomal subunit protein uS15.